The primary structure comprises 130 residues: Small ribosomal subunit protein uS9 (130 aa).

The interval 109-130 is disordered; that stretch reads RMKERKKYGLKGARRAPQFSKR. Positions 111-130 are enriched in basic residues; sequence KERKKYGLKGARRAPQFSKR.

The protein belongs to the universal ribosomal protein uS9 family.

The protein is Small ribosomal subunit protein uS9 of Alkaliphilus metalliredigens (strain QYMF).